A 197-amino-acid polypeptide reads, in one-letter code: dITP/XTP pyrophosphatase (197 aa).

9–14 (TNNLNK) serves as a coordination point for substrate. Mg(2+) contacts are provided by Glu-42 and Asp-71. Asp-71 acts as the Proton acceptor in catalysis. Substrate contacts are provided by residues Ser-72, 153–156 (FGYD), Lys-176, and 181–182 (HR).

The protein belongs to the HAM1 NTPase family. As to quaternary structure, homodimer. It depends on Mg(2+) as a cofactor.

It carries out the reaction XTP + H2O = XMP + diphosphate + H(+). The catalysed reaction is dITP + H2O = dIMP + diphosphate + H(+). The enzyme catalyses ITP + H2O = IMP + diphosphate + H(+). In terms of biological role, pyrophosphatase that catalyzes the hydrolysis of nucleoside triphosphates to their monophosphate derivatives, with a high preference for the non-canonical purine nucleotides XTP (xanthosine triphosphate), dITP (deoxyinosine triphosphate) and ITP. Seems to function as a house-cleaning enzyme that removes non-canonical purine nucleotides from the nucleotide pool, thus preventing their incorporation into DNA/RNA and avoiding chromosomal lesions. In Leptospira interrogans serogroup Icterohaemorrhagiae serovar copenhageni (strain Fiocruz L1-130), this protein is dITP/XTP pyrophosphatase.